Here is a 344-residue protein sequence, read N- to C-terminus: Thiamine thiazole synthase (344 aa).

Substrate-binding positions include Cys-90, 111 to 112 (EA), Gly-119, and Val-184. The residue at position 232 (Cys-232) is a 2,3-didehydroalanine (Cys). Residues Asp-234, His-249, Met-301, and 311–313 (RMG) contribute to the substrate site.

This sequence belongs to the THI4 family. In terms of assembly, homooctamer. Interacts with cyp-41. It depends on Fe cation as a cofactor. Post-translationally, during the catalytic reaction, a sulfide is transferred from Cys-232 to a reaction intermediate, generating a dehydroalanine residue.

It localises to the cytoplasm. Its subcellular location is the nucleus. The enzyme catalyses [ADP-thiazole synthase]-L-cysteine + glycine + NAD(+) = [ADP-thiazole synthase]-dehydroalanine + ADP-5-ethyl-4-methylthiazole-2-carboxylate + nicotinamide + 3 H2O + 2 H(+). Its function is as follows. Involved in biosynthesis of the thiamine precursor thiazole. Catalyzes the conversion of NAD and glycine to adenosine diphosphate 5-(2-hydroxyethyl)-4-methylthiazole-2-carboxylic acid (ADT), an adenylated thiazole intermediate. The reaction includes an iron-dependent sulfide transfer from a conserved cysteine residue of the protein to a thiazole intermediate. The enzyme can only undergo a single turnover, which suggests it is a suicide enzyme. May have additional roles in adaptation to various stress conditions and in DNA damage tolerance. The protein is Thiamine thiazole synthase of Neurospora crassa (strain ATCC 24698 / 74-OR23-1A / CBS 708.71 / DSM 1257 / FGSC 987).